A 71-amino-acid chain; its full sequence is Mitotic-spindle organizing protein 1 (71 aa).

It belongs to the MOZART1 family. Part of the gamma-tubulin complex.

It localises to the cytoplasm. It is found in the cytoskeleton. Its subcellular location is the microtubule organizing center. The protein resides in the spindle pole body. In terms of biological role, required for gamma-tubulin complex recruitment to the microtubule organizing center (MTOC). This chain is Mitotic-spindle organizing protein 1, found in Aspergillus clavatus (strain ATCC 1007 / CBS 513.65 / DSM 816 / NCTC 3887 / NRRL 1 / QM 1276 / 107).